The sequence spans 281 residues: Acetyl-coenzyme A carboxylase carboxyl transferase subunit beta (281 aa).

The CoA carboxyltransferase N-terminal domain maps to 23 to 281 (IWTKCGSCQA…SLLVKLHYKN (259 aa)). Positions 27, 30, 46, and 49 each coordinate Zn(2+). Residues 27-49 (CGSCQAVLYKSELEKLQEVCPKC) form a C4-type zinc finger.

This sequence belongs to the AccD/PCCB family. Acetyl-CoA carboxylase is a heterohexamer composed of biotin carboxyl carrier protein (AccB), biotin carboxylase (AccC) and two subunits each of ACCase subunit alpha (AccA) and ACCase subunit beta (AccD). It depends on Zn(2+) as a cofactor.

It is found in the cytoplasm. The catalysed reaction is N(6)-carboxybiotinyl-L-lysyl-[protein] + acetyl-CoA = N(6)-biotinyl-L-lysyl-[protein] + malonyl-CoA. Its pathway is lipid metabolism; malonyl-CoA biosynthesis; malonyl-CoA from acetyl-CoA: step 1/1. Component of the acetyl coenzyme A carboxylase (ACC) complex. Biotin carboxylase (BC) catalyzes the carboxylation of biotin on its carrier protein (BCCP) and then the CO(2) group is transferred by the transcarboxylase to acetyl-CoA to form malonyl-CoA. This Alteromonas mediterranea (strain DSM 17117 / CIP 110805 / LMG 28347 / Deep ecotype) protein is Acetyl-coenzyme A carboxylase carboxyl transferase subunit beta.